Consider the following 196-residue polypeptide: Ribosome maturation factor RimP (196 aa).

Residues 164-196 are disordered; the sequence is LAPQKPNKPGPKKPGHDKKKPSNEPAAGKPRAE. Residues 173–182 are compositionally biased toward basic residues; it reads GPKKPGHDKK.

This sequence belongs to the RimP family.

It is found in the cytoplasm. Required for maturation of 30S ribosomal subunits. The sequence is that of Ribosome maturation factor RimP from Xanthomonas campestris pv. campestris (strain 8004).